A 323-amino-acid polypeptide reads, in one-letter code: Mycothiol acetyltransferase (323 aa).

Position 44 (Glu44) interacts with 1D-myo-inositol 2-(L-cysteinylamino)-2-deoxy-alpha-D-glucopyranoside. 98–100 (LAV) contributes to the acetyl-CoA binding site. The 151-residue stretch at 173–323 (VSLRAFIPGQ…DVMYGPKNGG (151 aa)) folds into the N-acetyltransferase domain. Positions 200, 240, and 253 each coordinate 1D-myo-inositol 2-(L-cysteinylamino)-2-deoxy-alpha-D-glucopyranoside. Acetyl-CoA-binding positions include 257–259 (VGV) and 264–270 (QGMGLGK). Tyr291 lines the 1D-myo-inositol 2-(L-cysteinylamino)-2-deoxy-alpha-D-glucopyranoside pocket.

Belongs to the acetyltransferase family. MshD subfamily. Monomer.

The catalysed reaction is 1D-myo-inositol 2-(L-cysteinylamino)-2-deoxy-alpha-D-glucopyranoside + acetyl-CoA = mycothiol + CoA + H(+). In terms of biological role, catalyzes the transfer of acetyl from acetyl-CoA to desacetylmycothiol (Cys-GlcN-Ins) to form mycothiol. This Arthrobacter sp. (strain FB24) protein is Mycothiol acetyltransferase.